The primary structure comprises 28 residues: leu operon leader peptide (28 aa).

In terms of biological role, involved in control of the biosynthesis of leucine. This chain is leu operon leader peptide (leuL), found in Shigella flexneri.